The primary structure comprises 566 residues: Sulfite reductase [NADPH] hemoprotein beta-component (566 aa).

C430, C436, C475, and C479 together coordinate [4Fe-4S] cluster. Residue C479 participates in siroheme binding.

Belongs to the nitrite and sulfite reductase 4Fe-4S domain family. As to quaternary structure, alpha(8)-beta(8). The alpha component is a flavoprotein, the beta component is a hemoprotein. Requires siroheme as cofactor. It depends on [4Fe-4S] cluster as a cofactor.

The catalysed reaction is hydrogen sulfide + 3 NADP(+) + 3 H2O = sulfite + 3 NADPH + 4 H(+). The protein operates within sulfur metabolism; hydrogen sulfide biosynthesis; hydrogen sulfide from sulfite (NADPH route): step 1/1. In terms of biological role, component of the sulfite reductase complex that catalyzes the 6-electron reduction of sulfite to sulfide. This is one of several activities required for the biosynthesis of L-cysteine from sulfate. This chain is Sulfite reductase [NADPH] hemoprotein beta-component, found in Baumannia cicadellinicola subsp. Homalodisca coagulata.